We begin with the raw amino-acid sequence, 316 residues long: Arginine transport system permease protein ArgU (316 aa).

The segment covering 1 to 14 (MSDLNQGPGASTAQ) has biased composition (polar residues). The segment at 1–20 (MSDLNQGPGASTAQPKPIEA) is disordered. 6 helical membrane passes run 29–49 (WVAA…ALNN), 74–94 (IALT…LAVM), 108–128 (LYLW…WGLL), 151–171 (MFLL…AEIV), 217–237 (LISM…LELY), and 251–271 (VPML…LMVG). The ABC transmembrane type-1 domain maps to 70-274 (ALHTIALTLL…TSILMVGQYY (205 aa)).

This sequence belongs to the binding-protein-dependent transport system permease family. The complex is probably composed of two ATP-binding proteins (ArgV), two transmembrane proteins (ArgU) and a solute-binding protein (ArgT).

It is found in the cell membrane. In terms of biological role, part of the ABC transporter complex ArgTUV involved in L-arginine import. May also transport L-citrulline. Probably responsible for the translocation of the substrate across the membrane. This is Arginine transport system permease protein ArgU from Corynebacterium glutamicum (strain ATCC 13032 / DSM 20300 / JCM 1318 / BCRC 11384 / CCUG 27702 / LMG 3730 / NBRC 12168 / NCIMB 10025 / NRRL B-2784 / 534).